Here is a 208-residue protein sequence, read N- to C-terminus: Small ribosomal subunit protein uS4 (208 aa).

Residues 98-161 (RRLDNVIYRL…KESPRIKELL (64 aa)) enclose the S4 RNA-binding domain.

Belongs to the universal ribosomal protein uS4 family. As to quaternary structure, part of the 30S ribosomal subunit. Contacts protein S5. The interaction surface between S4 and S5 is involved in control of translational fidelity.

In terms of biological role, one of the primary rRNA binding proteins, it binds directly to 16S rRNA where it nucleates assembly of the body of the 30S subunit. Its function is as follows. With S5 and S12 plays an important role in translational accuracy. The polypeptide is Small ribosomal subunit protein uS4 (Pelotomaculum thermopropionicum (strain DSM 13744 / JCM 10971 / SI)).